The following is a 313-amino-acid chain: Olfactory receptor 8B2 (313 aa).

The Extracellular portion of the chain corresponds to 1–25 (MLARNNSLVTEFILAGLTDHPEFRQ). N-linked (GlcNAc...) asparagine glycosylation is present at Asn5. A helical membrane pass occupies residues 26 to 46 (PLFFLFLVIYIVTMVGNLGLI). At 47-54 (TLFGLNSH) the chain is on the cytoplasmic side. The chain crosses the membrane as a helical span at residues 55-75 (LHTPMYYFLFNLSFIDLCYSS). The Extracellular segment spans residues 76-99 (VFTPKMLMNFVSKKNIISNVGCMT). An intrachain disulfide couples Cys97 to Cys189. Residues 100–120 (RLFFFLFFVISECYMLTSMAY) traverse the membrane as a helical segment. Topologically, residues 121–139 (DRYVAICNPLLYKVTMSHQ) are cytoplasmic. The chain crosses the membrane as a helical span at residues 140-160 (VCSMLTFAAYIMGLAGATAHT). The Extracellular portion of the chain corresponds to 161–197 (GCMLRLTFCSANIINHYLCDILPLLQLSCTSTYVNEV). Residues 198–217 (VVLIVVGTNITVPSCTILIS) traverse the membrane as a helical segment. At 218–237 (YVFIVTSILHIKSTQGRSKA) the chain is on the cytoplasmic side. A helical membrane pass occupies residues 238 to 258 (FSTCSSHVIALSLFFGSAAFM). Residues 259–270 (YIKYSSGSMEQG) lie on the Extracellular side of the membrane. The chain crosses the membrane as a helical span at residues 271–291 (KVSSVFYTNVVPMLNPLIYSL). The Cytoplasmic segment spans residues 292–313 (RNKDVKVALRKALIKIQRRNIF).

Belongs to the G-protein coupled receptor 1 family.

It is found in the cell membrane. Functionally, odorant receptor. This chain is Olfactory receptor 8B2 (OR8B2), found in Homo sapiens (Human).